Reading from the N-terminus, the 92-residue chain is Small ribosomal subunit protein bS20 (92 aa).

The segment at 1–23 (MANTPSAKKRAKQAEKRRSHNAS) is disordered. The span at 7–20 (AKKRAKQAEKRRSH) shows a compositional bias: basic residues.

The protein belongs to the bacterial ribosomal protein bS20 family.

Binds directly to 16S ribosomal RNA. The sequence is that of Small ribosomal subunit protein bS20 from Pseudomonas entomophila (strain L48).